Here is a 214-residue protein sequence, read N- to C-terminus: Peptide methionine sulfoxide reductase MsrA 2 (214 aa).

C45 is a catalytic residue.

The protein belongs to the MsrA Met sulfoxide reductase family.

It carries out the reaction L-methionyl-[protein] + [thioredoxin]-disulfide + H2O = L-methionyl-(S)-S-oxide-[protein] + [thioredoxin]-dithiol. The catalysed reaction is [thioredoxin]-disulfide + L-methionine + H2O = L-methionine (S)-S-oxide + [thioredoxin]-dithiol. Its function is as follows. Has an important function as a repair enzyme for proteins that have been inactivated by oxidation. Catalyzes the reversible oxidation-reduction of methionine sulfoxide in proteins to methionine. This chain is Peptide methionine sulfoxide reductase MsrA 2 (msrA2), found in Synechocystis sp. (strain ATCC 27184 / PCC 6803 / Kazusa).